Reading from the N-terminus, the 242-residue chain is ATP-dependent dethiobiotin synthetase BioD (242 aa).

Position 12–17 (12–17 (EVGKTV)) interacts with ATP. Mg(2+) is bound at residue threonine 16. Lysine 37 is an active-site residue. Substrate is bound at residue serine 41. ATP-binding positions include aspartate 51 and 112-115 (EGAG). Mg(2+) contacts are provided by aspartate 51 and glutamate 112.

Belongs to the dethiobiotin synthetase family. As to quaternary structure, homodimer. The cofactor is Mg(2+).

It localises to the cytoplasm. The enzyme catalyses (7R,8S)-7,8-diammoniononanoate + CO2 + ATP = (4R,5S)-dethiobiotin + ADP + phosphate + 3 H(+). It participates in cofactor biosynthesis; biotin biosynthesis; biotin from 7,8-diaminononanoate: step 1/2. Its function is as follows. Catalyzes a mechanistically unusual reaction, the ATP-dependent insertion of CO2 between the N7 and N8 nitrogen atoms of 7,8-diaminopelargonic acid (DAPA, also called 7,8-diammoniononanoate) to form a ureido ring. This is ATP-dependent dethiobiotin synthetase BioD from Bacillus cereus (strain B4264).